We begin with the raw amino-acid sequence, 290 residues long: Ribosomal protein L11 methyltransferase (290 aa).

S-adenosyl-L-methionine is bound by residues T135, G158, D180, and N227.

The protein belongs to the methyltransferase superfamily. PrmA family.

It is found in the cytoplasm. It catalyses the reaction L-lysyl-[protein] + 3 S-adenosyl-L-methionine = N(6),N(6),N(6)-trimethyl-L-lysyl-[protein] + 3 S-adenosyl-L-homocysteine + 3 H(+). In terms of biological role, methylates ribosomal protein L11. This is Ribosomal protein L11 methyltransferase from Mesorhizobium japonicum (strain LMG 29417 / CECT 9101 / MAFF 303099) (Mesorhizobium loti (strain MAFF 303099)).